A 154-amino-acid polypeptide reads, in one-letter code: Putative pre-16S rRNA nuclease (154 aa).

Belongs to the YqgF nuclease family.

It localises to the cytoplasm. In terms of biological role, could be a nuclease involved in processing of the 5'-end of pre-16S rRNA. This chain is Putative pre-16S rRNA nuclease, found in Rickettsia bellii (strain OSU 85-389).